The sequence spans 297 residues: Probable endonuclease 4 (297 aa).

Zn(2+)-binding residues include His69, His110, Glu145, Asp179, His182, His214, Asp227, His229, and Glu259.

This sequence belongs to the AP endonuclease 2 family. It depends on Zn(2+) as a cofactor.

It catalyses the reaction Endonucleolytic cleavage to 5'-phosphooligonucleotide end-products.. Functionally, endonuclease IV plays a role in DNA repair. It cleaves phosphodiester bonds at apurinic or apyrimidinic (AP) sites, generating a 3'-hydroxyl group and a 5'-terminal sugar phosphate. The protein is Probable endonuclease 4 of Oceanobacillus iheyensis (strain DSM 14371 / CIP 107618 / JCM 11309 / KCTC 3954 / HTE831).